Reading from the N-terminus, the 337-residue chain is Transaldolase (337 aa).

Position 115 is an N6-acetyllysine (Lys-115). Residue Lys-142 is the Schiff-base intermediate with substrate of the active site. Lys-219 carries the post-translational modification N6-acetyllysine. A phosphoserine mark is found at Ser-237 and Ser-256. N6-acetyllysine occurs at positions 269, 286, and 321.

It belongs to the transaldolase family. Type 1 subfamily. Homodimer.

The protein resides in the cytoplasm. The enzyme catalyses D-sedoheptulose 7-phosphate + D-glyceraldehyde 3-phosphate = D-erythrose 4-phosphate + beta-D-fructose 6-phosphate. It functions in the pathway carbohydrate degradation; pentose phosphate pathway; D-glyceraldehyde 3-phosphate and beta-D-fructose 6-phosphate from D-ribose 5-phosphate and D-xylulose 5-phosphate (non-oxidative stage): step 2/3. Transaldolase is important for the balance of metabolites in the pentose-phosphate pathway. In Bos taurus (Bovine), this protein is Transaldolase (TALDO1).